The sequence spans 461 residues: Serine--tRNA ligase (461 aa).

The interval 112–134 (EVPFGRDENDNREHHTFGEKPRF) is disordered. Residues 114–134 (PFGRDENDNREHHTFGEKPRF) are compositionally biased toward basic and acidic residues. 252–254 (TAE) lines the L-serine pocket. Residue 283-285 (RAE) participates in ATP binding. Glutamate 306 is an L-serine binding site. 370–373 (EISS) lines the ATP pocket. Serine 406 contacts L-serine.

Belongs to the class-II aminoacyl-tRNA synthetase family. Type-1 seryl-tRNA synthetase subfamily. As to quaternary structure, homodimer. The tRNA molecule binds across the dimer.

It is found in the cytoplasm. It carries out the reaction tRNA(Ser) + L-serine + ATP = L-seryl-tRNA(Ser) + AMP + diphosphate + H(+). The catalysed reaction is tRNA(Sec) + L-serine + ATP = L-seryl-tRNA(Sec) + AMP + diphosphate + H(+). Its pathway is aminoacyl-tRNA biosynthesis; selenocysteinyl-tRNA(Sec) biosynthesis; L-seryl-tRNA(Sec) from L-serine and tRNA(Sec): step 1/1. Its function is as follows. Catalyzes the attachment of serine to tRNA(Ser). Is also able to aminoacylate tRNA(Sec) with serine, to form the misacylated tRNA L-seryl-tRNA(Sec), which will be further converted into selenocysteinyl-tRNA(Sec). The polypeptide is Serine--tRNA ligase (Methylocella silvestris (strain DSM 15510 / CIP 108128 / LMG 27833 / NCIMB 13906 / BL2)).